The sequence spans 597 residues: MAMKRKLNEHDVPEPESPQSPKRRASDASQSEPASPPAPTPAKEVVASFAELQLEPRLLRGIRDQKWGSPTAVQSKAIPLALQGRDILARSGTGTGKTGAYLLPILHNTLLRKGKTSLILVPTKELALQITKVAKALSAHCGQAVRIQNIAGKESEVVTKAKLADNPDIVIATPARASANINTGALAVTELAHLVVDEGDLVMGYGFKEDLDQIAQNIPKGVQMFLMSATLNTEVESLGSLLCNDPVVLKLDDLDKDSKRVKQYVIKCAEEEKFLLIYAMFKLGLIKGKTIVFVGDTDRSYRVKLFLEQFGIKSCVLNSELPLASRLHIVEEFNKNIYNILIASDETEILGSQKKADESRPKKKPKTDKEAKNDSGVSRGIDFLNVSCVLNFDFPATYKSYFHRIGRTARAGKSGTAISFIIPKDKYRKHKSTTFAGCENDEEVLKKVEKHQEAGQKLENYNFDMKRLEPFRYRFGDALRSVTRIAIREARIKEIRLELSKSQKLSRYFEENPEALAHLRHDQTLNHPARIQPHLKHVPDYLLPGGSRKPADVGFVGLNVPRVNKRQYVKGKGRKVVRRNGKVDPLKTFNARGKGKK.

Residues 1–13 show a composition bias toward basic and acidic residues; it reads MAMKRKLNEHDVP. Residues 1 to 43 are disordered; the sequence is MAMKRKLNEHDVPEPESPQSPKRRASDASQSEPASPPAPTPAK. Positions 47–75 match the Q motif motif; that stretch reads ASFAELQLEPRLLRGIRDQKWGSPTAVQS. Residues 78-249 form the Helicase ATP-binding domain; that stretch reads IPLALQGRDI…SLLCNDPVVL (172 aa). Position 91 to 98 (91 to 98) interacts with ATP; that stretch reads SGTGTGKT. The DEAD box signature appears at 197 to 200; sequence DEGD. In terms of domain architecture, Helicase C-terminal spans 260 to 469; sequence RVKQYVIKCA…NYNFDMKRLE (210 aa). The tract at residues 352 to 374 is disordered; that stretch reads SQKKADESRPKKKPKTDKEAKND.

It belongs to the DEAD box helicase family. DDX56/DBP9 subfamily.

The protein localises to the nucleus. It localises to the nucleolus. It carries out the reaction ATP + H2O = ADP + phosphate + H(+). Functionally, ATP-binding RNA helicase involved in the biogenesis of 60S ribosomal subunits and is required for the normal formation of 25S and 5.8S rRNAs. The polypeptide is ATP-dependent RNA helicase DBP9 (DBP9) (Phaeosphaeria nodorum (strain SN15 / ATCC MYA-4574 / FGSC 10173) (Glume blotch fungus)).